We begin with the raw amino-acid sequence, 370 residues long: MESNKDEAERCISIALKAIQSNQPDRALRFLEKAQRLYPTPRVHALIESLNQKPQPAGDQPQPTEATHTTHRKAAGANTASANGEAGGESTKGYTAEQVAAVKRVKQCKDYYEILGVSRGASDEDLKKAYRKLALKFHPDKNHAPGATEAFKAIGTAYAVLSNPEKRKQYDQFGDDKGQAARHGHGHGDFHRGFEADISPEDLFNMFFGGGFPSSNVHVYSNGRMRYTYHQRQDRRENQGDGGLGVFVQLMPILILILVSALSQLMVSSPPYSLSLRPSVGHVHKRVTDHLNVVYYVADTFSQEYTGSSLKMVERNVEDDYIANLRNNCWKEKQQKEGLLYRARYFGDADMYNKAQKDGAPQAVTDCQRL.

Methionine 1 is subject to N-acetylmethionine. The interval 51 to 92 (NQKPQPAGDQPQPTEATHTTHRKAAGANTASANGEAGGESTK) is disordered. The 65-residue stretch at 110–174 (DYYEILGVSR…EKRKQYDQFG (65 aa)) folds into the J domain. A Pros-methylhistidine modification is found at histidine 185. Residues 242–262 (GGLGVFVQLMPILILILVSAL) traverse the membrane as a helical segment.

The protein belongs to the DnaJ family. DNAJB12/DNAJB14 subfamily. As to quaternary structure, homodimer and homotetramer. Interacts (via J domain) with HSPA8/Hsc70. Forms a multiprotein complex, at least composed of DNAJB12, DNAJB14, HSPA8/Hsc70 and SGTA; interaction with DNAJB14 and HSPA8/Hsc70 is direct. Post-translationally, methylated at His-185 by METTL9.

The protein localises to the endoplasmic reticulum membrane. The protein resides in the nucleus membrane. Its function is as follows. Acts as a co-chaperone with HSPA8/Hsc70; required to promote protein folding and trafficking, prevent aggregation of client proteins, and promote unfolded proteins to endoplasmic reticulum-associated degradation (ERAD) pathway. Acts by determining HSPA8/Hsc70's ATPase and polypeptide-binding activities. Can also act independently of HSPA8/Hsc70: together with DNAJB14, acts as a chaperone that promotes maturation of potassium channels KCND2 and KCNH2 by stabilizing nascent channel subunits and assembling them into tetramers. While stabilization of nascent channel proteins is dependent on HSPA8/Hsc70, the process of oligomerization of channel subunits is independent of HSPA8/Hsc70. When overexpressed, forms membranous structures together with DNAJB14 and HSPA8/Hsc70 within the nucleus; the role of these structures, named DJANGOs, is still unclear. The polypeptide is DnaJ homolog subfamily B member 12 (DNAJB12) (Bos taurus (Bovine)).